The primary structure comprises 548 residues: CTL-like protein DDB_G0288717 (548 aa).

Residues 1–44 form a disordered region; sequence MWAPEEDYKQPLLTNSRVANNGNNNNSNGRGGSSSPSTRLQPEH. N-linked (GlcNAc...) asparagine glycosylation is present at asparagine 25. The chain crosses the membrane as a helical span at residues 52–72; it reads ILFTILFLLVIGGMAAISGIA. N-linked (GlcNAc...) asparagine glycosylation is present at asparagine 97. 4 helical membrane passes run 125 to 145, 151 to 171, 184 to 204, and 226 to 246; these read DILI…IQLL, FFIY…GGLF, MIVG…IVYL, and PSVF…IAYW. A glycan (N-linked (GlcNAc...) asparagine) is linked at asparagine 273. The next 2 helical transmembrane spans lie at 290 to 310 and 350 to 370; these read NLMY…SAVF and FGSL…AFML. The N-linked (GlcNAc...) asparagine glycan is linked to asparagine 377. The next 3 helical transmembrane spans lie at 381–401, 442–462, and 479–499; these read KLVV…ESIV, FIGG…SALF, and IALS…IVGI. N-linked (GlcNAc...) asparagine glycosylation is present at asparagine 544.

It belongs to the CTL (choline transporter-like) family.

Its subcellular location is the membrane. In Dictyostelium discoideum (Social amoeba), this protein is CTL-like protein DDB_G0288717.